Reading from the N-terminus, the 72-residue chain is Large ribosomal subunit protein uL29 (72 aa).

It belongs to the universal ribosomal protein uL29 family.

This Microcystis aeruginosa (strain NIES-843 / IAM M-2473) protein is Large ribosomal subunit protein uL29.